We begin with the raw amino-acid sequence, 331 residues long: 2-hydroxyacid dehydrogenase homolog (331 aa).

NAD(+)-binding positions include 154 to 155 (HI), 234 to 236 (TSR), and aspartate 260. Arginine 236 is an active-site residue. Glutamate 265 is an active-site residue. Residue histidine 297 is the Proton donor of the active site. 297–300 (HQAF) serves as a coordination point for NAD(+).

Belongs to the D-isomer specific 2-hydroxyacid dehydrogenase family.

The polypeptide is 2-hydroxyacid dehydrogenase homolog (ddh) (Zymomonas mobilis subsp. mobilis (strain ATCC 31821 / ZM4 / CP4)).